The following is a 351-amino-acid chain: Photosystem II D2 protein (351 aa).

The helical transmembrane segment at 39–59 (TAYLAVGGWFTGTTFVTSWYT) threads the bilayer. Position 116 (His116) interacts with chlorophyll a. Residues 123-139 (GFCLRQFEIARLVGIRP) traverse the membrane as a helical segment. Residues Gln128 and Asn141 each contribute to the pheophytin a site. Residues 151 to 164 (IFVSVFLLYPLGQA) form a helical membrane-spanning segment. Residue His196 coordinates chlorophyll a. A helical transmembrane segment spans residues 206 to 226 (GALLCAIHGATVENTLFEDGD). A plastoquinone-binding residues include His213 and Phe260. His213 contacts Fe cation. Residue His267 participates in Fe cation binding. The chain crosses the membrane as a helical span at residues 277–293 (GLWTSAIGIVGLALNLR).

Belongs to the reaction center PufL/M/PsbA/D family. As to quaternary structure, PSII is composed of 1 copy each of membrane proteins PsbA, PsbB, PsbC, PsbD, PsbE, PsbF, PsbH, PsbI, PsbJ, PsbK, PsbL, PsbM, PsbT, PsbX, PsbY, PsbZ, Psb30/Ycf12, at least 3 peripheral proteins of the oxygen-evolving complex and a large number of cofactors. It forms dimeric complexes. It depends on The D1/D2 heterodimer binds P680, chlorophylls that are the primary electron donor of PSII, and subsequent electron acceptors. It shares a non-heme iron and each subunit binds pheophytin, quinone, additional chlorophylls, carotenoids and lipids. There is also a Cl(-1) ion associated with D1 and D2, which is required for oxygen evolution. The PSII complex binds additional chlorophylls, carotenoids and specific lipids. as a cofactor.

It localises to the plastid. It is found in the chloroplast thylakoid membrane. It catalyses the reaction 2 a plastoquinone + 4 hnu + 2 H2O = 2 a plastoquinol + O2. Photosystem II (PSII) is a light-driven water:plastoquinone oxidoreductase that uses light energy to abstract electrons from H(2)O, generating O(2) and a proton gradient subsequently used for ATP formation. It consists of a core antenna complex that captures photons, and an electron transfer chain that converts photonic excitation into a charge separation. The D1/D2 (PsbA/PsbD) reaction center heterodimer binds P680, the primary electron donor of PSII as well as several subsequent electron acceptors. D2 is needed for assembly of a stable PSII complex. The sequence is that of Photosystem II D2 protein from Heterosigma akashiwo (strain NIES-293 / 8280G21-1).